A 342-amino-acid chain; its full sequence is Tryptophan--tRNA ligase (342 aa).

ATP-binding positions include 19-21 and 27-28; these read QPS and GN. The 'HIGH' region signature appears at 20–28; the sequence is PSGELTIGN. Asp143 lines the L-tryptophan pocket. ATP-binding positions include 155-157, Val194, and 203-207; these read GED and KMSKS. A 'KMSKS' region motif is present at residues 203 to 207; the sequence is KMSKS.

It belongs to the class-I aminoacyl-tRNA synthetase family. In terms of assembly, homodimer.

The protein resides in the cytoplasm. It catalyses the reaction tRNA(Trp) + L-tryptophan + ATP = L-tryptophyl-tRNA(Trp) + AMP + diphosphate + H(+). In terms of biological role, catalyzes the attachment of tryptophan to tRNA(Trp). The protein is Tryptophan--tRNA ligase of Yersinia pestis.